The following is a 684-amino-acid chain: Glycine--tRNA ligase beta subunit (684 aa).

It belongs to the class-II aminoacyl-tRNA synthetase family. In terms of assembly, tetramer of two alpha and two beta subunits.

It is found in the cytoplasm. The catalysed reaction is tRNA(Gly) + glycine + ATP = glycyl-tRNA(Gly) + AMP + diphosphate. This Pseudomonas syringae pv. syringae (strain B728a) protein is Glycine--tRNA ligase beta subunit.